The following is a 96-amino-acid chain: Protein Vpr (96 aa).

A homooligomerization region spans residues 1–42 (MEQAPEDQGPQREPHNEWTLELLEEIKNEAVRHFPRVWLHQL). Phosphoserine; by host is present on residues Ser79, Ser94, and Ser96.

This sequence belongs to the HIV-1 VPR protein family. Homooligomer, may form homodimer. Interacts with p6-gag region of the Pr55 Gag precursor protein through a (Leu-X-X)4 motif near the C-terminus of the P6gag protein. Interacts with host UNG. May interact with host RAD23A/HHR23A. Interacts with host VPRBP/DCAF1, leading to hijack the CUL4A-RBX1-DDB1-DCAF1/VPRBP complex, mediating ubiquitination of host proteins such as TERT and ZGPAT and arrest of the cell cycle in G2 phase. Post-translationally, phosphorylated on several residues by host. These phosphorylations regulate VPR activity for the nuclear import of the HIV-1 pre-integration complex.

Its subcellular location is the virion. The protein localises to the host nucleus. The protein resides in the host extracellular space. Its function is as follows. During virus replication, may deplete host UNG protein, and incude G2-M cell cycle arrest. Acts by targeting specific host proteins for degradation by the 26S proteasome, through association with the cellular CUL4A-DDB1 E3 ligase complex by direct interaction with host VPRPB/DCAF-1. Cell cycle arrest reportedly occurs within hours of infection and is not blocked by antiviral agents, suggesting that it is initiated by the VPR carried into the virion. Additionally, VPR induces apoptosis in a cell cycle dependent manner suggesting that these two effects are mechanistically linked. Detected in the serum and cerebrospinal fluid of AIDS patient, VPR may also induce cell death to bystander cells. During virus entry, plays a role in the transport of the viral pre-integration (PIC) complex to the host nucleus. This function is crucial for viral infection of non-dividing macrophages. May act directly at the nuclear pore complex, by binding nucleoporins phenylalanine-glycine (FG)-repeat regions. In Homo sapiens (Human), this protein is Protein Vpr.